The primary structure comprises 119 residues: Large ribosomal subunit protein bL20 (119 aa).

The protein belongs to the bacterial ribosomal protein bL20 family.

Its function is as follows. Binds directly to 23S ribosomal RNA and is necessary for the in vitro assembly process of the 50S ribosomal subunit. It is not involved in the protein synthesizing functions of that subunit. The protein is Large ribosomal subunit protein bL20 of Caldanaerobacter subterraneus subsp. tengcongensis (strain DSM 15242 / JCM 11007 / NBRC 100824 / MB4) (Thermoanaerobacter tengcongensis).